A 151-amino-acid chain; its full sequence is Multiprotein-bridging factor 1 (151 aa).

Disordered stretches follow at residues 1–29 and 78–98; these read MSDW…ARSQ and DPNV…SQKD. Positions 41-119 are essential for TBP-binding; it reads VVSVDKKYGS…VNDYEAARAI (79 aa). Residues 85 to 139 form the HTH cro/C1-type domain; sequence ISRARTDKKMSQKDLATKINEKPTVVNDYEAARAIPNQQVLSKLERALGVKLRGN. A compositionally biased stretch (basic and acidic residues) spans 88 to 98; the sequence is ARTDKKMSQKD. Positions 96–115 form a DNA-binding region, H-T-H motif; it reads QKDLATKINEKPTVVNDYEA. A Phosphoserine modification is found at serine 143.

It belongs to the MBF1 family. Interacts with TBP and the transcription factor GCN4. Interacts with RPS3/us3.

The protein localises to the cytoplasm. It is found in the nucleus. In terms of biological role, transcriptional coactivator that stimulates GCN4-dependent transcriptional activity by bridging the DNA-binding region of GCN4 and TBP (SPT15), thereby recruiting TBP to GCN4-bound promoters. Involved in induction of the ribosome quality control (RQC) pathway; a pathway that degrades nascent peptide chains during problematic translation. Required to prevent stalled ribosomes from frameshifting. This Saccharomyces cerevisiae (strain ATCC 204508 / S288c) (Baker's yeast) protein is Multiprotein-bridging factor 1 (MBF1).